We begin with the raw amino-acid sequence, 213 residues long: ABA-inducible protein PHV A1 (213 aa).

2 disordered regions span residues Met1–Thr158 and Asn182–His213. The span at Gly13–Thr23 shows a compositional bias: basic and acidic residues. 9 LEA 11-mer repeat repeats span residues Met27 to Thr37, Thr38 to Thr48, Ala49 to Thr59, Ala60 to Ala70, Ala78 to Thr88, Ala89 to Gly99, Thr111 to Thr121, Thr122 to Ala132, and Thr133 to Thr143. Positions Met27–Thr143 are 11 X 11 AA tandem repeats of T-E-A-A-K-Q-K-A-A-E-T. Composition is skewed to basic and acidic residues over residues Thr41–Thr74, Ala81–Gln98, and Glu109–Ala140. The span at Ala193 to His213 shows a compositional bias: low complexity.

It belongs to the LEA type 4 family.

This chain is ABA-inducible protein PHV A1 (HVA1), found in Hordeum vulgare (Barley).